Reading from the N-terminus, the 587-residue chain is A-type ATP synthase subunit A (587 aa).

234-241 (GPFGSGKT) serves as a coordination point for ATP.

It belongs to the ATPase alpha/beta chains family. In terms of assembly, the N-terminus (approximately residues 106-122) interacts with subunit H. Has multiple subunits with at least A(3), B(3), C, D, E(1 or 2), F, H(2), I and proteolipid K(x).

The protein resides in the cell membrane. It catalyses the reaction ATP + H2O + 4 H(+)(in) = ADP + phosphate + 5 H(+)(out). Its activity is regulated as follows. ATP hydrolysis is inhibited by N',N'-dicyclohexylcarbodiimide. Functionally, component of the A-type ATP synthase that produces ATP from ADP in the presence of a proton gradient across the membrane. The A chain is the catalytic subunit. Hydrolyzes ATP, GTP (86% of ATPase rate) and UTP (54% of ATPase rate), has very poor activity on CTP. The polypeptide is A-type ATP synthase subunit A (Methanocaldococcus jannaschii (strain ATCC 43067 / DSM 2661 / JAL-1 / JCM 10045 / NBRC 100440) (Methanococcus jannaschii)).